Reading from the N-terminus, the 300-residue chain is DNA repair protein RecO (300 aa).

Belongs to the RecO family.

Its function is as follows. Involved in DNA repair and RecF pathway recombination. In Nostoc punctiforme (strain ATCC 29133 / PCC 73102), this protein is DNA repair protein RecO.